Reading from the N-terminus, the 195-residue chain is Molybdenum cofactor guanylyltransferase (195 aa).

GTP is bound by residues 10–12 (LAG), lysine 23, asparagine 51, aspartate 69, and aspartate 99. Mg(2+) is bound at residue aspartate 99.

Belongs to the MobA family. Monomer. Requires Mg(2+) as cofactor.

Its subcellular location is the cytoplasm. The enzyme catalyses Mo-molybdopterin + GTP + H(+) = Mo-molybdopterin guanine dinucleotide + diphosphate. Its function is as follows. Transfers a GMP moiety from GTP to Mo-molybdopterin (Mo-MPT) cofactor (Moco or molybdenum cofactor) to form Mo-molybdopterin guanine dinucleotide (Mo-MGD) cofactor. The chain is Molybdenum cofactor guanylyltransferase from Shewanella putrefaciens (strain CN-32 / ATCC BAA-453).